Here is a 527-residue protein sequence, read N- to C-terminus: Putative pumilio homolog 13 (527 aa).

The disordered stretch occupies residues 22-51; sequence ENMTTAASSSQSQPPQMQSSKFHQPENHIH. Low complexity predominate over residues 24–41; it reads MTTAASSSQSQPPQMQSS. Positions 184 to 527 constitute a PUM-HD domain; that stretch reads GVNNSWRSNE…GNKILEKLNI (344 aa). Pumilio repeat units lie at residues 205–243, 244–279, 283–321, 322–357, 358–396, 397–432, 433–468, and 469–503; these read SMEN…MIFD, GLIV…LIVD, RHIS…RIMD, AISS…RLLE, VVSQ…RLIS, EVIE…LLVN, KLLR…IVVD, and LLRG…MLRY.

Its subcellular location is the cytoplasm. In terms of biological role, sequence-specific RNA-binding protein that regulates translation and mRNA stability by binding the 3'-UTR of target mRNAs. The sequence is that of Putative pumilio homolog 13 (APUM13) from Arabidopsis thaliana (Mouse-ear cress).